We begin with the raw amino-acid sequence, 907 residues long: MEMSLTDSDWDSSSDSGSSEHEEVEFSYGGRAQNIFSNLEETIGKIDEFLSFERGFMYGDIVRSATEPSGQSGRVINIDMFVNLESTHGKIMKEVDTKRLQKLRSISLSDYVINGPWVGRVDKIVERVSVTLDDGTNYEVLVDGQDKLVAIPPNLLEDSQYSYYPGQRVQVKLAHAPRSTTWLCGTWRGTQVMGTVCTVEAGLVYVDWVASIVMEGDRNLTAPQALQNPESLTLLPCVSHASWQLGDWCILPGSSHCDIAERQTPNVAAYNLNECHKTFQKGFNRNMQNSGLDELFVITKTKMKVAVMWQDGSCSLGVDSQQLLPVGAVNAHDFWPEQFVVEKETCNSKKWGVVKAVNAKEQTVKVQWTIQVEKEATGCVDEVMEEIVSAYELLEHPDFGFCFSDVVVKLLPEGKFDPNADTIVATEAKHLLTESDYSGAYFLSSIGVVTGFKNGSVKVKWANGSTSKVAPCEIWKMERSEYSNSSTVSSEGSVQDLSQKISQSDEASSNHQETGLVKLYSVGESCNENIPECSSFFLPKAAIGFITNLASSLFGYQGSTSVISSHSRCNDSEDQSDSEVLVQETAESYDNSETNSGEVDMTTTMVNIPIEGKGINKTLDSTLLENSRNQVRFRQFDMVNDCSDHHFLSSDKGLAQSQVTKSWVKKVQQEWSNLEANLPNTIYVRVCEERMDLLRAALVGAPGTPYHDGLFFFDIMLPPQYPHEPPMVHYHSGGMRLNPNLYESGRVCLSLLNTWSGSGTEVWNAGSSSILQLLLSFQALVLNEKPYFNEAGYDKQLGRAEGEKNSVSYNENAFLITCKSMISMLRKPPKHFEMLVKDHFTHRAQHVLAACKAYMEGVPVGSSANLQGNSTTNSTGFKIMLSKLYPKLLEAFSEIGVDCVQEIGPES.

Disordered regions lie at residues 1-23 (MEMSLTDSDWDSSSDSGSSEHEE) and 485-509 (SSTVSSEGSVQDLSQKISQSDEASS). The segment covering 495 to 509 (QDLSQKISQSDEASS) has biased composition (polar residues). Positions 662 to 822 (SWVKKVQQEW…AFLITCKSMI (161 aa)) constitute a UBC core domain. Cys748 serves as the catalytic Glycyl thioester intermediate.

Belongs to the ubiquitin-conjugating enzyme family. As to quaternary structure, interacts with PHO1. Interacts with NLA. Expressed in the vascular tissues of cotyledons, leaves, roots, sepals, filaments, anthers and junctions between the inflorescence stems and siliques.

It is found in the golgi apparatus membrane. Its subcellular location is the endoplasmic reticulum membrane. It catalyses the reaction S-ubiquitinyl-[E1 ubiquitin-activating enzyme]-L-cysteine + [E2 ubiquitin-conjugating enzyme]-L-cysteine = [E1 ubiquitin-activating enzyme]-L-cysteine + S-ubiquitinyl-[E2 ubiquitin-conjugating enzyme]-L-cysteine.. The protein operates within protein modification; protein ubiquitination. E2 ubiquitin-protein ligase that mediates E1-dependent protein ubiquitination. Mediates PHO1 degradation through multivesicular body-mediated vacuolar proteolysis in response to inorganic phosphate (Pi) availability. Negatively regulates the protein abundance of PHF1 and PHT1s under Pi-sufficient conditions by facilitating the degradation of PHT1 proteins at the endomembrane. Functions cooperatively with NLA to regulate the abundance of the inorganic phosphate (Pi) transporters PHT1-1, PHT1-2 and PHT1-3 in different subcellular compartments. Regulates Pi homeostasis by mediating, cooperatively with NLA, polyubiquitination of PHT1-4 and its targeting for degradation. The chain is Probable ubiquitin-conjugating enzyme E2 24 from Arabidopsis thaliana (Mouse-ear cress).